A 138-amino-acid chain; its full sequence is Large ribosomal subunit protein uL16 (138 aa).

The protein belongs to the universal ribosomal protein uL16 family. As to quaternary structure, part of the 50S ribosomal subunit.

In terms of biological role, binds 23S rRNA and is also seen to make contacts with the A and possibly P site tRNAs. This Rhodospirillum rubrum (strain ATCC 11170 / ATH 1.1.1 / DSM 467 / LMG 4362 / NCIMB 8255 / S1) protein is Large ribosomal subunit protein uL16.